A 65-amino-acid chain; its full sequence is MPGVKVKESEPFELALKKFKKQCEKAGILSEVRKREHFEKPSIKRKKKAIAARKRALKKQRKMMD.

The disordered stretch occupies residues 39 to 65 (EKPSIKRKKKAIAARKRALKKQRKMMD). Basic residues predominate over residues 43–65 (IKRKKKAIAARKRALKKQRKMMD).

Belongs to the bacterial ribosomal protein bS21 family.

This is Small ribosomal subunit protein bS21 from Pelobacter propionicus (strain DSM 2379 / NBRC 103807 / OttBd1).